We begin with the raw amino-acid sequence, 227 residues long: PKHD-type hydroxylase Neut_0373 (227 aa).

The Fe2OG dioxygenase domain occupies 78-179; that stretch reads KIMPPFFNRY…RIACFMFIQS (102 aa). Residues histidine 97, aspartate 99, and histidine 160 each coordinate Fe cation. Arginine 170 provides a ligand contact to 2-oxoglutarate.

The cofactor is Fe(2+). Requires L-ascorbate as cofactor.

The polypeptide is PKHD-type hydroxylase Neut_0373 (Nitrosomonas eutropha (strain DSM 101675 / C91 / Nm57)).